A 293-amino-acid chain; its full sequence is Protoheme IX farnesyltransferase (293 aa).

A run of 9 helical transmembrane segments spans residues Leu-9–Ala-29, Tyr-38–Leu-58, Phe-86–Gly-106, Leu-111–Trp-131, Ile-137–Thr-157, Trp-167–Phe-187, Ile-211–Gly-231, Ser-234–Tyr-254, and Ile-271–Ile-291.

The protein belongs to the UbiA prenyltransferase family. Protoheme IX farnesyltransferase subfamily.

The protein resides in the cell inner membrane. It carries out the reaction heme b + (2E,6E)-farnesyl diphosphate + H2O = Fe(II)-heme o + diphosphate. Its pathway is porphyrin-containing compound metabolism; heme O biosynthesis; heme O from protoheme: step 1/1. Converts heme B (protoheme IX) to heme O by substitution of the vinyl group on carbon 2 of heme B porphyrin ring with a hydroxyethyl farnesyl side group. The chain is Protoheme IX farnesyltransferase from Blochmanniella floridana.